The following is a 345-amino-acid chain: Transcription factor 19 (345 aa).

An FHA domain is found at 31–88; that stretch reads YRLGHRADLCDVALRPQQEPGLISGIHAELHAEPRGDDWRVSLEDHSSQGTLVNNVRL. At S78 the chain carries Phosphoserine. Residues 190 to 227 form a disordered region; the sequence is LTFSPSWGGPKSLPVPAPPGEMGTTPSAPPQRNRRKSV. A PHD-type zinc finger spans residues 293-342; that stretch reads AAPCCCLPQEETVAWVQCDGCDVWFHVACVGCSIQAAREADFRCPGCRAG. Zn(2+)-binding residues include C296, C298, C310, C313, H318, C321, C336, and C339.

The protein localises to the nucleus. Functionally, potential transcription factor that may play a role in the regulation of genes involved in cell cycle G1/S transition. May bind to regulatory elements of genes, including the promoter of the transcription factor FOXO1. The chain is Transcription factor 19 (TCF19) from Homo sapiens (Human).